The sequence spans 92 residues: C-C motif chemokine 3 (92 aa).

Residues 1-23 (MKVSTTALAVLLCTMTLCNQVFS) form the signal peptide. Intrachain disulfides connect C34–C57 and C35–C73.

The protein belongs to the intercrine beta (chemokine CC) family. Self-associates. Also heterodimer of MIP-1-alpha(4-69) and MIP-1-beta(3-69). Interacts with CCR1. As to expression, expressed in lung, spleen, and pancreas.

The protein localises to the secreted. In terms of biological role, monokine with inflammatory and chemokinetic properties. Binds to CCR1, CCR4 and CCR5. One of the major HIV-suppressive factors produced by CD8+ T-cells. Recombinant MIP-1-alpha induces a dose-dependent inhibition of different strains of HIV-1, HIV-2, and simian immunodeficiency virus (SIV). The polypeptide is C-C motif chemokine 3 (Ccl3) (Mus musculus (Mouse)).